A 729-amino-acid polypeptide reads, in one-letter code: Polyribonucleotide nucleotidyltransferase (729 aa).

Positions 485 and 491 each coordinate Mg(2+). The KH domain maps to 552-611 (PRITTMKVAEDKIRTIIGKGGATIKGLIESTGVSIDIDDSGVIQLFSPDKMALEEAQKQI). Residues 621–689 (GQTYQGKVSK…KQGRVKLEWK (69 aa)) form the S1 motif domain. The interval 710-729 (TMEEQSEEINSGNKISEEEE) is disordered.

This sequence belongs to the polyribonucleotide nucleotidyltransferase family. Component of the RNA degradosome, which is a multiprotein complex involved in RNA processing and mRNA degradation. Mg(2+) serves as cofactor.

It is found in the cytoplasm. The catalysed reaction is RNA(n+1) + phosphate = RNA(n) + a ribonucleoside 5'-diphosphate. Functionally, involved in mRNA degradation. Catalyzes the phosphorolysis of single-stranded polyribonucleotides processively in the 3'- to 5'-direction. The sequence is that of Polyribonucleotide nucleotidyltransferase from Legionella pneumophila (strain Paris).